A 781-amino-acid polypeptide reads, in one-letter code: MSKVRVYEYAKEHQVSSKKVIEALKDLGIEVANHMSTINENALRQLDNAVDGTNKKAEAPKKETTSNENGNSKGPNKPNMTNSNEKSNKPNKPAGQANKPATANKSQGAKPATNKPANTGNQTQASGNQQAGGQKRNNNNNSNRPGGGNPNRPGGNNRPNRGGNFNNKGRNTKKKGKLNHSTVPPTPPKPKELPEKIVFSESLTVAELAKKLYREPSELIKKLFMLGVVATINQSLDKDAIELICDDYGVQVEEEIKVDVTDLDVYFENELNEAVDESKLVERPPVVTIMGHVDHGKTTLLDSLRNTKVTLGEAGGITQHIGAYQLEIHNKKITFLDTPGHAAFTAMRARGAQITDITILVVAADDGVMPQTIEAINHAKAAGMPIIVAVNKIDKPQANPDRVMQELTEYELVPEAWGGDTIFAPISAKFGEGLENLLDMILLVSEVEELKANPDRRAIGSVIEAELDKGRGPVATLLVQDGTLNIGDPIVVGNTFGRVRAMVNDLGRRVKKVGPSTPVEITGLNDVPQAGDRFVVFEDEKTARNIGETRASRALVAQRSATNRVSLDNLFEHMKAGEMKEVNVIIKADVQGSVEALAASLRKIDVEGVNVKIIHTAVGAINESDITLAAASNAIIIGFNVRPTTQAREAAENESVDIRLHRVIYKAIDEIEAAMKGMLDPEFQEKIIGQAQVRQTINVSKVGTIAGCYVTDGKITRDSGVRIIRDGIVVFEGEIATLKRFKDDAKEVAKGYECGITVQNFNDIKEDDVIEAYVMEEIERK.

The segment at 44–195 (RQLDNAVDGT…TPPKPKELPE (152 aa)) is disordered. The span at 53–65 (TNKKAEAPKKETT) shows a compositional bias: basic and acidic residues. Over residues 66-81 (SNENGNSKGPNKPNMT) the composition is skewed to polar residues. The span at 82-93 (NSNEKSNKPNKP) shows a compositional bias: low complexity. Positions 115-126 (KPANTGNQTQAS) are enriched in polar residues. Residues 127–169 (GNQQAGGQKRNNNNNSNRPGGGNPNRPGGNNRPNRGGNFNNKG) are compositionally biased toward low complexity. The region spanning 282 to 451 (ERPPVVTIMG…LLVSEVEELK (170 aa)) is the tr-type G domain. The interval 291–298 (GHVDHGKT) is G1. GTP is bound at residue 291-298 (GHVDHGKT). A G2 region spans residues 316–320 (GITQH). The segment at 337–340 (DTPG) is G3. GTP is bound by residues 337–341 (DTPGH) and 391–394 (NKID). Residues 391–394 (NKID) form a G4 region. The G5 stretch occupies residues 427 to 429 (SAK).

The protein belongs to the TRAFAC class translation factor GTPase superfamily. Classic translation factor GTPase family. IF-2 subfamily.

It is found in the cytoplasm. In terms of biological role, one of the essential components for the initiation of protein synthesis. Protects formylmethionyl-tRNA from spontaneous hydrolysis and promotes its binding to the 30S ribosomal subunits. Also involved in the hydrolysis of GTP during the formation of the 70S ribosomal complex. This chain is Translation initiation factor IF-2, found in Listeria monocytogenes serotype 4a (strain HCC23).